The sequence spans 226 residues: MNPILINKLQRKLGYTFTHSELLQQALTHRSASSKHNERLEFLGDSILSYVIANALYHRFPRVDEGDMSRMRATLVRGNTLAEMAREFDLGECLRLGPGELKSGGFRRESILADTVEALIGGVFLDSDIQTVEKLILDWYQTRLDEISPGDKQKDPKTRLQEYLQGRHLPLPSYLVVQVRGEAHDQEFTIHCQVSGMAEPVVGVGSSRRKAEQAAAEQALIKLGLE.

Positions 6 to 128 constitute an RNase III domain; sequence INKLQRKLGY…LIGGVFLDSD (123 aa). Glutamate 41 contacts Mg(2+). Aspartate 45 is a catalytic residue. Mg(2+) is bound by residues aspartate 114 and glutamate 117. The active site involves glutamate 117. One can recognise a DRBM domain in the interval 155 to 225; it reads DPKTRLQEYL…AEQALIKLGL (71 aa).

The protein belongs to the ribonuclease III family. As to quaternary structure, homodimer. Requires Mg(2+) as cofactor.

It is found in the cytoplasm. The catalysed reaction is Endonucleolytic cleavage to 5'-phosphomonoester.. In terms of biological role, digests double-stranded RNA. Involved in the processing of primary rRNA transcript to yield the immediate precursors to the large and small rRNAs (23S and 16S). Processes some mRNAs, and tRNAs when they are encoded in the rRNA operon. Processes pre-crRNA and tracrRNA of type II CRISPR loci if present in the organism. The protein is Ribonuclease 3 (rnc) of Pantoea ananatis (strain LMG 20103).